Reading from the N-terminus, the 281-residue chain is Large ribosomal subunit protein uL2 (281 aa).

A disordered region spans residues 223-281; the sequence is VRGSVMNPVDHPHGGGEGKQPVGRKSPLTPWGKIALGVKTRKTKKSSNKLILRRRKDAK. Positions 261–281 are enriched in basic residues; that stretch reads KTRKTKKSSNKLILRRRKDAK.

It belongs to the universal ribosomal protein uL2 family. Part of the 50S ribosomal subunit. Forms a bridge to the 30S subunit in the 70S ribosome.

Its function is as follows. One of the primary rRNA binding proteins. Required for association of the 30S and 50S subunits to form the 70S ribosome, for tRNA binding and peptide bond formation. It has been suggested to have peptidyltransferase activity; this is somewhat controversial. Makes several contacts with the 16S rRNA in the 70S ribosome. This is Large ribosomal subunit protein uL2 from Mycoplasmopsis synoviae (strain 53) (Mycoplasma synoviae).